A 657-amino-acid chain; its full sequence is Histidine ammonia-lyase (657 aa).

A cross-link (5-imidazolinone (Ala-Gly)) is located at residues 253–255; the sequence is ASG. Residue S254 is modified to 2,3-didehydroalanine (Ser). Residue T396 is modified to Phosphothreonine. S635 is modified (phosphoserine). T637 is modified (phosphothreonine). S648 is modified (phosphoserine).

Belongs to the PAL/histidase family. Post-translationally, contains an active site 4-methylidene-imidazol-5-one (MIO), which is formed autocatalytically by cyclization and dehydration of residues Ala-Ser-Gly.

It catalyses the reaction L-histidine = trans-urocanate + NH4(+). It functions in the pathway amino-acid degradation; L-histidine degradation into L-glutamate; N-formimidoyl-L-glutamate from L-histidine: step 1/3. This is Histidine ammonia-lyase (Hal) from Mus musculus (Mouse).